Reading from the N-terminus, the 72-residue chain is Prokaryotic ubiquitin-like protein Pup (72 aa).

The span at 1 to 11 (MAQRDTGGGQQ) shows a compositional bias: gly residues. The interval 1–41 (MAQRDTGGGQQRTGRRDDETAEAEVEESGASDLKERHEKLS) is disordered. Acidic residues predominate over residues 19–29 (ETAEAEVEESG). Residues 22 to 61 (EAEVEESGASDLKERHEKLSEDVDSLLDEIDDVLEENAEE) adopt a coiled-coil conformation. The interval 28 to 66 (SGASDLKERHEKLSEDVDSLLDEIDDVLEENAEEFVKGY) is ARC ATPase binding. A compositionally biased stretch (basic and acidic residues) spans 32–41 (DLKERHEKLS). The residue at position 72 (Q72) is a Deamidated glutamine. Q72 participates in a covalent cross-link: Isoglutamyl lysine isopeptide (Gln-Lys) (interchain with K-? in acceptor proteins).

This sequence belongs to the prokaryotic ubiquitin-like protein family. Strongly interacts with the proteasome-associated ATPase ARC through a hydrophobic interface; the interacting region of Pup lies in its C-terminal half. There is one Pup binding site per ARC hexamer ring. In terms of processing, is modified by deamidation of its C-terminal glutamine to glutamate by the deamidase Dop, a prerequisite to the subsequent pupylation process.

It functions in the pathway protein degradation; proteasomal Pup-dependent pathway. Its function is as follows. Protein modifier that is covalently attached to lysine residues of substrate proteins, thereby targeting them for proteasomal degradation. The tagging system is termed pupylation. This chain is Prokaryotic ubiquitin-like protein Pup, found in Parafrankia sp. (strain EAN1pec).